Reading from the N-terminus, the 224-residue chain is MTDKNDALTLKKRFRGYFPVVIDVETAGFNAQTDALLEICAVTLSMDENGDLHPASTIHFHVEPFEGANLEKAALEFTGIYDPFSPLRGAVSEDHALKEIYKLVRKEQKAADCSRAIIVAHNAHFDHSFVMAASERCKLKRVPFHPFATFDTATLSGLAFGQTVLAKACKTAGMEFDNREAHSALYDTQKTAELFCTIVNQWKALGGWPLVNDDEDNNNDADLD.

Residues 20-195 (VVIDVETAGF…YDTQKTAELF (176 aa)) enclose the Exonuclease domain. The Mg(2+) site is built by Asp-23, Glu-25, His-182, and Asp-187. The active-site Proton donor/acceptor is His-182.

Belongs to the RNase T family. Homodimer. Mg(2+) serves as cofactor.

In terms of biological role, trims short 3' overhangs of a variety of RNA species, leaving a one or two nucleotide 3' overhang. Responsible for the end-turnover of tRNA: specifically removes the terminal AMP residue from uncharged tRNA (tRNA-C-C-A). Also appears to be involved in tRNA biosynthesis. This Vibrio cholerae serotype O1 (strain ATCC 39315 / El Tor Inaba N16961) protein is Ribonuclease T.